The primary structure comprises 416 residues: Subtilisin-like protease 12 (416 aa).

The signal sequence occupies residues 1 to 19; the sequence is MSILKMMLIYFAIFWVVNA. Positions 20-116 are excised as a propeptide; it reads AQLLDIDSQG…VEPNKEMQVA (97 aa). The Inhibitor I9 domain occupies 35 to 115; it reads YIVVMKDRVS…FVEPNKEMQV (81 aa). N-linked (GlcNAc...) asparagine glycosylation is found at Asn-123, Asn-136, and Asn-150. A Peptidase S8 domain is found at 125-416; it reads TWGLSRISHK…NKLLYNGSGA (292 aa). Residues Asp-157 and His-188 each act as charge relay system in the active site. 4 N-linked (GlcNAc...) asparagine glycosylation sites follow: Asn-249, Asn-305, Asn-334, and Asn-353. Residue Ser-362 is the Charge relay system of the active site. N-linked (GlcNAc...) asparagine glycosylation is found at Asn-404 and Asn-412.

The protein belongs to the peptidase S8 family.

Its subcellular location is the secreted. Its function is as follows. Secreted subtilisin-like serine protease with keratinolytic activity that contributes to pathogenicity. In Arthroderma benhamiae (strain ATCC MYA-4681 / CBS 112371) (Trichophyton mentagrophytes), this protein is Subtilisin-like protease 12 (SUB12).